Consider the following 409-residue polypeptide: MKRAHLFVVGVYLLSSCRAEEGLNFPTYDGKDRVVSLSEKNFKQILKKYDLLCLYYHAPVSADKVAQKQFQLKEIVLELVAQVLEHKEIGFVMVDAKKEAKLAKKLGFDEEGSLYILKGDRTIEFDGEFAADVLVEFLLDLIEDPVEIINSKLEVQAFERIEDHIKLIGFFKSADSEYYKAFEEAAEHFQPYIKFFATFDKGVAKKLSLKMNEVDFYEPFMDEPTPIPNKPYTEEELVEFVKEHQRPTLRRLRPEDMFETWEDDLNGIHIVPFAEKSDPDGYEFLEILKQVARDNTDNPDLSIVWIDPDDFPLLVAYWEKTFKIDLFKPQIGVVNVTDADSVWMEIPDDDDLPTAEELEDWIEDVLSGKINTEDDDNEDEDDDDDNDDDDDDNGNSDEEDNDDSDEDDE.

Residues M1–A19 form the signal peptide. Residue Y282 is modified to Phosphotyrosine. The N-linked (GlcNAc...) asparagine glycan is linked to N335. Residues D364–E409 form a disordered region. Positions E373–E409 are enriched in acidic residues.

The protein belongs to the calsequestrin family. In terms of assembly, monomer, homodimer and homooligomer. Mostly monomeric in the absence of calcium. Forms higher oligomers in a calcium-dependent manner. Dimers associate to form tetramers, that then form linear homomer chains. Interacts with ASPH and TRDN. In terms of processing, phosphorylation in the C-terminus, probably by CK2, moderately increases calcium buffering capacity. N-glycosylated. In terms of tissue distribution, detected in heart muscle (at protein level).

It localises to the sarcoplasmic reticulum lumen. Its function is as follows. Calsequestrin is a high-capacity, moderate affinity, calcium-binding protein and thus acts as an internal calcium store in muscle. Calcium ions are bound by clusters of acidic residues at the protein surface, especially at the interface between subunits. Can bind around 60 Ca(2+) ions. Regulates the release of lumenal Ca(2+) via the calcium release channel RYR2; this plays an important role in triggering muscle contraction. Plays a role in excitation-contraction coupling in the heart and in regulating the rate of heart beats. The sequence is that of Calsequestrin-2 (CASQ2) from Oryctolagus cuniculus (Rabbit).